The sequence spans 341 residues: tRNA N6-adenosine threonylcarbamoyltransferase (341 aa).

Fe cation is bound by residues H111 and H115. Residues 134 to 138 (LVSGG), D167, G180, and N276 contribute to the substrate site. D304 is a binding site for Fe cation.

Belongs to the KAE1 / TsaD family. The cofactor is Fe(2+).

The protein resides in the cytoplasm. The catalysed reaction is L-threonylcarbamoyladenylate + adenosine(37) in tRNA = N(6)-L-threonylcarbamoyladenosine(37) in tRNA + AMP + H(+). Its function is as follows. Required for the formation of a threonylcarbamoyl group on adenosine at position 37 (t(6)A37) in tRNAs that read codons beginning with adenine. Is involved in the transfer of the threonylcarbamoyl moiety of threonylcarbamoyl-AMP (TC-AMP) to the N6 group of A37, together with TsaE and TsaB. TsaD likely plays a direct catalytic role in this reaction. The sequence is that of tRNA N6-adenosine threonylcarbamoyltransferase from Pseudomonas syringae pv. tomato (strain ATCC BAA-871 / DC3000).